We begin with the raw amino-acid sequence, 756 residues long: MESTPFNRQQWTSLSLRVTAKELSLVNKNKSSAIVEIFSKYQKAAEEANMEKRRSNTENLPQHFRRGNLTVLKKKWENPAPGVESLPESTRNSSAEVRHRGDPPPAEVASSSASGVEADQGVCPRPRFSSPPEVPYPNPRIKDTEHLKDHSAESKKMENCLAESRHEVGKPETSENAEASNKIEKYNVPLNRLKMMFERGEPAQTKILRAQSRSTGGRKISENSYSLDDLEIGPGQLSSSAFNTEKSESRRNLEFPRLSDTSIKDRMAKYQAAVSKQSSSTNYTNELKANGGEIKTHKLEQKENVPPGPEVCISHQDGEKVSASENSLAACSTPPEDDSCKSQVKSDVQQPVHPKPLSPVARASSLSESSPPKAVKKFQAPARETCVECQKTVYPMERLLANQQVFHISCFRCSYCNNKLSLGTYASLHGRIYCKPHFNQLFKSKGNYDEGFGHRPHKDLWASKLENEETLERPAQLPNAAEIPQSPGVEDAPIAKVGVLTASMEAKASSQLEKEDKPAETKKLRIAWPPPTELSSSGSALEEGIKVSKPKWPPEDEVSKPEAPEDVDLDLKKLRRSSSLKERSRPFTVAASFRTASVKSPKPLSPPMRKGWSLSEQSEEFGGGVAAERKQMEKASASEKNGSVGKTTWPSKESRGGEAAGRSKEVQDFEIGSENLIENGASLDEGDRDLLQQQSPLEPKSKNWSSFADNTSAKEFTTQKQKSQDVEFWEGEVVEELSVEEQIKRNRYYDEEEDEE.

Methionine 1 is subject to N-acetylmethionine. 2 positions are modified to phosphoserine: serine 15 and serine 55. Over residues 44-56 (AAEEANMEKRRSN) the composition is skewed to basic and acidic residues. Disordered stretches follow at residues 44–183 (AAEE…SNKI) and 204–377 (QTKI…AVKK). Residues 107 to 118 (EVASSSASGVEA) show a composition bias toward low complexity. Serine 130 is modified (phosphoserine). The span at 140–173 (RIKDTEHLKDHSAESKKMENCLAESRHEVGKPET) shows a compositional bias: basic and acidic residues. A Required for interaction with NPC1L1 motif is present at residues 164–166 (SRH). Position 221 is a phosphoserine (serine 221). The residue at position 225 (tyrosine 225) is a Phosphotyrosine. Serine 226 and serine 238 each carry phosphoserine. The segment covering 245-254 (EKSESRRNLE) has biased composition (basic and acidic residues). The residue at position 259 (serine 259) is a Phosphoserine. Polar residues predominate over residues 274-287 (VSKQSSSTNYTNEL). The span at 294-303 (IKTHKLEQKE) shows a compositional bias: basic and acidic residues. Phosphoserine occurs at positions 339, 346, 358, 365, and 370. The LIM zinc-binding domain maps to 384–444 (ETCVECQKTV…KPHFNQLFKS (61 aa)). Lysine 435 carries the post-translational modification N6-succinyllysine. Position 486 is a phosphoserine (serine 486). Positions 489-509 (VEDAPIAKVGVLTASMEAKAS) are required for interaction with MYO5B. Positions 508-726 (ASSQLEKEDK…TTQKQKSQDV (219 aa)) are disordered. A compositionally biased stretch (basic and acidic residues) spans 512–523 (LEKEDKPAETKK). A compositionally biased stretch (low complexity) spans 533–542 (ELSSSGSALE). The span at 552 to 563 (WPPEDEVSKPEA) shows a compositional bias: basic and acidic residues. Phosphoserine is present on residues serine 597, serine 600, serine 605, and serine 613. Positions 627-637 (AERKQMEKASA) are enriched in basic and acidic residues. The span at 638-651 (SEKNGSVGKTTWPS) shows a compositional bias: polar residues. Positions 652–667 (KESRGGEAAGRSKEVQ) are enriched in basic and acidic residues. Residues 691 to 721 (LQQQSPLEPKSKNWSSFADNTSAKEFTTQKQ) are compositionally biased toward polar residues. Serine 695, serine 723, and serine 738 each carry phosphoserine.

Interacts with NPC1L1; bridges NPC1L1 with MYO5B. Interacts with MYO5B; bridges MYO5B with NPC1L1. Interacts with PXN; this complex stabilizes actin dynamics. Interacts with F-actin and G-actin. Interacts with LUZP1 (via C-terminus); both proteins restrict ciliation and may work together to regulate this process. Binds RAB40B (GTP-bound); interaction influences LIMA1 subcellular localization in lamellipodia during cell migration. In terms of processing, phosphorylation of the C-terminal region by MAPK1/MAPK3 reduces its association with F-actin and contributes to actin filament reorganization and enhances cell motility. Ubiquitinated by the ECS(RAB40B) complex leading to its degradation. Widely expressed. Highest levels of isoform 2 are expressed in lung, spleen and small intestine. Isoform 2 is expressed at higher levels than isoform 1 in most tissues except liver, fat and kidney. Isoform 1 and isoform 2 are expressed at low levels in skeletal muscle, heart, stomach and lymph.

It localises to the cytoplasm. The protein localises to the cell junction. The protein resides in the focal adhesion. Its subcellular location is the cytoskeleton. It is found in the stress fiber. It localises to the cell membrane. The protein localises to the cell projection. The protein resides in the ruffle. Its subcellular location is the lamellipodium. Functionally, actin-binding protein involved in actin cytoskeleton regulation and dynamics. Increases the number and size of actin stress fibers and inhibits membrane ruffling. Inhibits actin filament depolymerization. Bundles actin filaments, delays filament nucleation and reduces formation of branched filaments. Acts as a negative regulator of primary cilium formation. Plays a role in cholesterol homeostasis. Influences plasma cholesterol levels through regulation of intestinal cholesterol absorption. May act as a scaffold protein by regulating NPC1L1 transportation, an essential protein for cholesterol absorption, to the plasma membrane by recruiting MYO5B to NPC1L1, and thus facilitates cholesterol uptake. In Sus scrofa (Pig), this protein is LIM domain and actin-binding protein 1.